Here is a 473-residue protein sequence, read N- to C-terminus: Photosystem II CP43 reaction center protein (473 aa).

Residues 1–14 (MKTLYSLRRFYPVE) constitute a propeptide that is removed on maturation. Thr15 carries the N-acetylthreonine modification. Thr15 is modified (phosphothreonine). Transmembrane regions (helical) follow at residues 69-93 (LFEVAHFVPEKPMYEQGLILLPHLA), 134-155 (LLGPETLEESFPFFGYVWKDRN), 178-200 (KALYFGGVYDTWAPGGGDVRKIT), 255-275 (KPFAWARRALVWSGEAYLSYS), and 291-312 (WFNNTAYPSEFYGPTGPEASQA). Position 367 (Glu367) interacts with [CaMn4O5] cluster. Residues 447–471 (RARAAAAGFEKGIDRDFEPVLFMTP) form a helical membrane-spanning segment.

The protein belongs to the PsbB/PsbC family. PsbC subfamily. As to quaternary structure, PSII is composed of 1 copy each of membrane proteins PsbA, PsbB, PsbC, PsbD, PsbE, PsbF, PsbH, PsbI, PsbJ, PsbK, PsbL, PsbM, PsbT, PsbX, PsbY, PsbZ, Psb30/Ycf12, at least 3 peripheral proteins of the oxygen-evolving complex and a large number of cofactors. It forms dimeric complexes. Requires Binds multiple chlorophylls and provides some of the ligands for the Ca-4Mn-5O cluster of the oxygen-evolving complex. It may also provide a ligand for a Cl- that is required for oxygen evolution. PSII binds additional chlorophylls, carotenoids and specific lipids. as cofactor.

The protein resides in the plastid. It localises to the chloroplast thylakoid membrane. One of the components of the core complex of photosystem II (PSII). It binds chlorophyll and helps catalyze the primary light-induced photochemical processes of PSII. PSII is a light-driven water:plastoquinone oxidoreductase, using light energy to abstract electrons from H(2)O, generating O(2) and a proton gradient subsequently used for ATP formation. This chain is Photosystem II CP43 reaction center protein, found in Cucumis sativus (Cucumber).